The sequence spans 214 residues: Large ribosomal subunit protein uL3 (214 aa).

The interval 133–154 is disordered; that stretch reads GLGAGHGTQRKHRSPGSIGGCA.

Belongs to the universal ribosomal protein uL3 family. In terms of assembly, part of the 50S ribosomal subunit. Forms a cluster with proteins L14 and L19.

One of the primary rRNA binding proteins, it binds directly near the 3'-end of the 23S rRNA, where it nucleates assembly of the 50S subunit. The chain is Large ribosomal subunit protein uL3 from Streptomyces avermitilis (strain ATCC 31267 / DSM 46492 / JCM 5070 / NBRC 14893 / NCIMB 12804 / NRRL 8165 / MA-4680).